We begin with the raw amino-acid sequence, 209 residues long: 2-phospho-L-lactate guanylyltransferase (209 aa).

The protein belongs to the CofC family. As to quaternary structure, homodimer.

The enzyme catalyses (2S)-2-phospholactate + GTP + H(+) = (2S)-lactyl-2-diphospho-5'-guanosine + diphosphate. It functions in the pathway cofactor biosynthesis; coenzyme F420 biosynthesis. In terms of biological role, guanylyltransferase that catalyzes the activation of (2S)-2-phospholactate (2-PL) as (2S)-lactyl-2-diphospho-5'-guanosine, via the condensation of 2-PL with GTP. It is involved in the biosynthesis of coenzyme F420, a hydride carrier cofactor. This chain is 2-phospho-L-lactate guanylyltransferase, found in Methanosphaerula palustris (strain ATCC BAA-1556 / DSM 19958 / E1-9c).